We begin with the raw amino-acid sequence, 85 residues long: Large ribosomal subunit protein bL27 (85 aa).

The protein belongs to the bacterial ribosomal protein bL27 family.

The chain is Large ribosomal subunit protein bL27 from Solibacter usitatus (strain Ellin6076).